The following is a 205-amino-acid chain: Dephospho-CoA kinase (205 aa).

The DPCK domain maps to 15–205; the sequence is VIGLTGGIAT…VERALDQASI (191 aa). An ATP-binding site is contributed by 23–28; the sequence is ATGKST.

This sequence belongs to the CoaE family.

The protein localises to the cytoplasm. The enzyme catalyses 3'-dephospho-CoA + ATP = ADP + CoA + H(+). Its pathway is cofactor biosynthesis; coenzyme A biosynthesis; CoA from (R)-pantothenate: step 5/5. Functionally, catalyzes the phosphorylation of the 3'-hydroxyl group of dephosphocoenzyme A to form coenzyme A. This Gloeobacter violaceus (strain ATCC 29082 / PCC 7421) protein is Dephospho-CoA kinase.